The following is a 1185-amino-acid chain: Adhesion G-protein coupled receptor G6 (1185 aa).

Residues 1–32 form the signal peptide; the sequence is MISFISGRWWRWKFQNTLAVFLLLICLSTSVA. Over 33-849 the chain is Extracellular; it reads QSCQSSTSCN…AELIDEKNNR (817 aa). Cys-41 and Cys-67 form a disulfide bridge. Positions 41 to 149 constitute a CUB domain; it reads CNVVLTDSQG…KGFHISYKQV (109 aa). The interval 41-354 is mediates interaction with type IV collagen; the sequence is CNVVLTDSQG…SSTQTDSTLS (314 aa). Positions 41-839 are inhibits receptor signaling in absence of type IV collagen; it reads CNVVLTDSQG…FGILMDVSRA (799 aa). The N-linked (GlcNAc...) asparagine glycan is linked to Asn-68. Residues Glu-89 and Asp-97 each coordinate Ca(2+). Residues Cys-94 and Cys-111 are joined by a disulfide bond. The N-linked (GlcNAc...) asparagine glycan is linked to Asn-121. Residues Asp-134, Ser-136, and Val-137 each contribute to the Ca(2+) site. The 202-residue stretch at 154-355 folds into the Pentraxin (PTX) domain; it reads RNQKVTMPKS…STQTDSTLSC (202 aa). 3 disulfides stabilise this stretch: Cys-185/Cys-248, Cys-229/Cys-271, and Cys-369/Cys-375. Residues Asn-395, Asn-429, Asn-470, Asn-539, Asn-550, Asn-562, Asn-565, Asn-613, Asn-680, Asn-691, Asn-719, Asn-763, Asn-799, and Asn-818 are each glycosylated (N-linked (GlcNAc...) asparagine). Disulfide bonds link Cys-508–Cys-544 and Cys-532–Cys-563. In terms of domain architecture, GAIN-B spans 658-840; the sequence is PSLTISSKNL…GILMDVSRAA (183 aa). 2 cysteine pairs are disulfide-bonded: Cys-790–Cys-822 and Cys-809–Cys-824. The interval 790-840 is GPS; sequence CVFWDFNLQNYSGGCNSDGCKVGSDSNSNRTVCLCNHLTHFGILMDVSRAA. The segment at 829 to 837 is stachel; sequence HFGILMDVS. Residues 850-870 form a helical membrane-spanning segment; the sequence is VLTFITYIGCGISAIFSAATL. At 871 to 886 the chain is on the cytoplasmic side; that stretch reads LTYIAFEKLRRDYPSK. The helical transmembrane segment at 887–907 threads the bilayer; that stretch reads ILMNLSTSLLFLNMVFLLDGW. Residues 908–915 lie on the Extracellular side of the membrane; it reads LASYEIKE. Residues 916 to 936 traverse the membrane as a helical segment; it reads LCVTVAVFLHFFLLTSFTWMG. The Cytoplasmic segment spans residues 937-957; it reads LESIHMYIALVKVFNTYIRRY. A helical transmembrane segment spans residues 958–978; sequence ILKFCIVGWGVPAAIVGIVLA. Residues 979–1013 lie on the Extracellular side of the membrane; sequence VSKDSYGKNYYGKGKDGQGTSEFCWILNPVVFYVT. Residues 1014–1034 form a helical membrane-spanning segment; the sequence is CVAYFSIIFLMNVAMFIVVMI. The Cytoplasmic segment spans residues 1035-1057; that stretch reads QICGRNGKRSNRTLREDILRNLR. Residues 1058–1080 form a helical membrane-spanning segment; it reads SVVSLTFLLGMTWGFAFFAWGPV. The Extracellular portion of the chain corresponds to 1081-1083; the sequence is SLA. A helical transmembrane segment spans residues 1084 to 1106; sequence FMYLFTIFNSLQGLFIFVFHCAL. Position 1092 (Asn-1092) interacts with 17alpha-hydroxyprogesterone. The Cytoplasmic segment spans residues 1107-1185; it reads KENVQKQWRR…RHSNADSTLQ (79 aa). The segment at 1138–1160 is disordered; it reads NTKKVSSDNLGKSLSSSSFGSTT. Residues 1144 to 1158 are compositionally biased toward low complexity; it reads SDNLGKSLSSSSFGS.

The protein belongs to the G-protein coupled receptor 2 family. Adhesion G-protein coupled receptor (ADGR) subfamily. In terms of processing, autoproteolytically processed at the GPS region of the GAIN-B domain; this cleavage modulates receptor activity. As to expression, expressed in Schwann cells of the posterior lateral line nerve and in brain.

The protein resides in the cell membrane. Its activity is regulated as follows. Forms a heterodimer of 2 chains generated by proteolytic processing that remain associated through non-covalent interactions mediated by the GAIN-B domain. In the inactivated receptor, the Stachel sequence (also named stalk) is embedded in the GAIN-B domain, where it adopts a beta-strand conformation. On activation, the Stachel moves into the 7 transmembrane region and adopts a twisted hook-shaped configuration that forms contacts within the receptor, leading to coupling of a G-alpha protein, which activates signaling. The cleaved GAIN-B and N-terminal domains can then dissociate from the rest of the receptor. Functionally, adhesion G-protein coupled receptor (aGPCR) for steroid hormones, such as progesterone and 17alpha-hydroxyprogesterone (17OHP). Ligand binding causes a conformation change that triggers signaling via guanine nucleotide-binding proteins (G proteins) and modulates the activity of downstream effectors, such as adenylate cyclase. Adgrg6 is coupled to G(i) G alpha proteins and mediates inhibition of adenylate cyclase. Also able to couple to G(q) G proteins. Involved in myelination of the peripheral nervous system: required for differentiation of promyelinating Schwann cells and for normal myelination of axons. G-protein coupled receptor activity can also be activated by type IV collagen, a major constituent of the basement membrane. Also plays a role inner ear development. In Danio rerio (Zebrafish), this protein is Adhesion G-protein coupled receptor G6 (adgrg6).